Here is a 1446-residue protein sequence, read N- to C-terminus: Major viral transcription factor ICP4 homolog (1446 aa).

4 disordered regions span residues 25–59, 73–493, 801–987, and 1385–1446; these read AEEE…GGLF, AAAG…PPAD, PGPA…HTPR, and THRP…LLLR. Positions 73 to 94 are enriched in low complexity; the sequence is AAAGATRPPRPPSAQQQQQPRR. Residues 101–112 are compositionally biased toward acidic residues; the sequence is VLDDEDEEEDEP. 2 stretches are compositionally biased toward low complexity: residues 166 to 189 and 216 to 241; these read RSSP…APRR and PAAV…PVSA. Over residues 262-277 the composition is skewed to basic and acidic residues; that stretch reads REPLLDEPAAARRLDP. 2 stretches are compositionally biased toward low complexity: residues 284–306 and 345–397; these read SPVS…ETVA and GFSS…SSSS. The segment covering 415–426 has biased composition (pro residues); it reads GPPPSPPAPAAA. Low complexity predominate over residues 427 to 442; it reads PRPSASSASSSAAASP. Pro residues predominate over residues 803-815; the sequence is PAEPAPGLPPLWP. The segment covering 827-877 has biased composition (low complexity); the sequence is PAAAGAPSGLPGSGPSSPASTKSSSSTKSSSSTKSGLSGSSGYASSPAAGP. Positions 883–892 are enriched in basic residues; that stretch reads RRKKKRRAPG. Positions 933 to 952 are enriched in low complexity; sequence LGLGPAPDPAPALLSSSSSS.

This sequence belongs to the herpesviridae ICP4 family. A long stretch of serine residues may be a major site of phosphorylation.

The protein localises to the host nucleus. Functionally, this IE protein is a multifunctional protein capable of migrating to the nucleus, binding to DNA, trans-activating other viral genes, and autoregulating its own synthesis. The chain is Major viral transcription factor ICP4 homolog (IE) from Suid herpesvirus 1 (strain Kaplan) (SuHV-1).